Here is a 516-residue protein sequence, read N- to C-terminus: Histidine ammonia-lyase 1 (516 aa).

The segment at residues S147–G149 is a cross-link (5-imidazolinone (Ser-Gly)). S148 bears the 2,3-didehydroalanine (Ser) mark.

This sequence belongs to the PAL/histidase family. Contains an active site 4-methylidene-imidazol-5-one (MIO), which is formed autocatalytically by cyclization and dehydration of residues Ser-Ser-Gly.

The protein localises to the cytoplasm. It catalyses the reaction L-histidine = trans-urocanate + NH4(+). It participates in amino-acid degradation; L-histidine degradation into L-glutamate; N-formimidoyl-L-glutamate from L-histidine: step 1/3. In Fusobacterium nucleatum subsp. nucleatum (strain ATCC 25586 / DSM 15643 / BCRC 10681 / CIP 101130 / JCM 8532 / KCTC 2640 / LMG 13131 / VPI 4355), this protein is Histidine ammonia-lyase 1 (hutH1).